Reading from the N-terminus, the 176-residue chain is Cytochrome b (176 aa).

The next 3 membrane-spanning stretches (helical) occupy residues F33–M53, W77–V98, and W113–L133. The heme b site is built by H83 and H97.

This sequence belongs to the cytochrome b family. As to quaternary structure, the cytochrome bc1 complex contains 11 subunits: 3 respiratory subunits (MT-CYB, CYC1 and UQCRFS1), 2 core proteins (UQCRC1 and UQCRC2) and 6 low-molecular weight proteins (UQCRH/QCR6, UQCRB/QCR7, UQCRQ/QCR8, UQCR10/QCR9, UQCR11/QCR10 and a cleavage product of UQCRFS1). This cytochrome bc1 complex then forms a dimer. It depends on heme b as a cofactor.

The protein resides in the mitochondrion inner membrane. Its function is as follows. Component of the ubiquinol-cytochrome c reductase complex (complex III or cytochrome b-c1 complex) that is part of the mitochondrial respiratory chain. The b-c1 complex mediates electron transfer from ubiquinol to cytochrome c. Contributes to the generation of a proton gradient across the mitochondrial membrane that is then used for ATP synthesis. This Mormopterus kalinowskii (Kalinowski's mastiff bat) protein is Cytochrome b (MT-CYB).